Reading from the N-terminus, the 736-residue chain is DNA topoisomerase 4 subunit A (736 aa).

A Topo IIA-type catalytic domain is found at 32 to 496; it reads LPDVRDGLKP…SFEQVTLTNQ (465 aa). The active-site O-(5'-phospho-DNA)-tyrosine intermediate is Tyr120.

Belongs to the type II topoisomerase GyrA/ParC subunit family. ParC type 1 subfamily. As to quaternary structure, heterotetramer composed of ParC and ParE.

The protein resides in the cell membrane. The catalysed reaction is ATP-dependent breakage, passage and rejoining of double-stranded DNA.. Topoisomerase IV is essential for chromosome segregation. It relaxes supercoiled DNA. Performs the decatenation events required during the replication of a circular DNA molecule. In Rickettsia bellii (strain RML369-C), this protein is DNA topoisomerase 4 subunit A.